The primary structure comprises 119 residues: MRKSYRIKKELEFQKVFETRNSFANKKFVVYVMDKPEQPHFRVGISVGKKIGNAVMRNYTKRRIRQSILEFKPLLRQDVDFLVIARPQASGLPMNEVKQQLEHVFKLAGLFASKQSEEE.

It belongs to the RnpA family. In terms of assembly, consists of a catalytic RNA component (M1 or rnpB) and a protein subunit.

The enzyme catalyses Endonucleolytic cleavage of RNA, removing 5'-extranucleotides from tRNA precursor.. Functionally, RNaseP catalyzes the removal of the 5'-leader sequence from pre-tRNA to produce the mature 5'-terminus. It can also cleave other RNA substrates such as 4.5S RNA. The protein component plays an auxiliary but essential role in vivo by binding to the 5'-leader sequence and broadening the substrate specificity of the ribozyme. This chain is Ribonuclease P protein component, found in Pediococcus pentosaceus (strain ATCC 25745 / CCUG 21536 / LMG 10740 / 183-1w).